A 284-amino-acid polypeptide reads, in one-letter code: Tropomyosin alpha-3 chain (284 aa).

The residue at position 1 (Met1) is an N-acetylmethionine. The tract at residues 1 to 43 (MEAIKKKMQMLKLDKENALDRAEQAEAEQKQAEERSKQLEDEL) is disordered. Residues 1–284 (MEAIKKKMQM…DHALNDMTSI (284 aa)) adopt a coiled-coil conformation. Glu2 is subject to N-acetylalanine. Positions 12-40 (KLDKENALDRAEQAEAEQKQAEERSKQLE) are enriched in basic and acidic residues. A Phosphothreonine modification is found at Thr53. Residues Ser61 and Ser87 each carry the phosphoserine modification. Thr108 carries the post-translational modification Phosphothreonine. Phosphoserine occurs at positions 206 and 215. Position 228 is an N6-acetyllysine (Leu228). Thr252 is subject to Phosphothreonine. Tyr261 is modified (phosphotyrosine). A Phosphoserine modification is found at Ser271. The residue at position 282 (Thr282) is a Phosphothreonine. Position 283 is a phosphoserine (Ser283).

The protein belongs to the tropomyosin family. In terms of assembly, homodimer. Heterodimer of an alpha (TPM1, TPM3 or TPM4) and a beta (TPM2) chain. Interacts with TMOD1. Interacts with TNNT1.

The protein resides in the cytoplasm. Its subcellular location is the cytoskeleton. In terms of biological role, binds to actin filaments in muscle and non-muscle cells. Plays a central role, in association with the troponin complex, in the calcium dependent regulation of vertebrate striated muscle contraction. Smooth muscle contraction is regulated by interaction with caldesmon. In non-muscle cells is implicated in stabilizing cytoskeleton actin filaments. This chain is Tropomyosin alpha-3 chain (TPM3), found in Bos taurus (Bovine).